We begin with the raw amino-acid sequence, 256 residues long: MQNRSSSPDSSSAGNTHFGFQSVPEGDKANKVAEVFHSVAARYDVMNDLMSAGLHRVWKAFTIGRANVRPGMKVLDIAGGTGDLARAFAKRAGPSGEVWLTDINDSMLRVGRDRLTDGGLILPLAVCDAEKLPFPDQYFDRVSVAFGLRNMTHKDRALAEMRRVLKPGGKLLVLEFSRVAKPLAPAYDWYSFNVLPWLGKKVANDEASYRYLAESIRMHPDQDTLADMMRAVGLDRVQYFNLTAGVAALHEGVRLG.

A compositionally biased stretch (polar residues) spans 1-19; sequence MQNRSSSPDSSSAGNTHFG. The disordered stretch occupies residues 1–24; that stretch reads MQNRSSSPDSSSAGNTHFGFQSVP. Residues T81, D102, and 128–129 contribute to the S-adenosyl-L-methionine site; that span reads DA.

It belongs to the class I-like SAM-binding methyltransferase superfamily. MenG/UbiE family.

It catalyses the reaction a 2-demethylmenaquinol + S-adenosyl-L-methionine = a menaquinol + S-adenosyl-L-homocysteine + H(+). The catalysed reaction is a 2-methoxy-6-(all-trans-polyprenyl)benzene-1,4-diol + S-adenosyl-L-methionine = a 5-methoxy-2-methyl-3-(all-trans-polyprenyl)benzene-1,4-diol + S-adenosyl-L-homocysteine + H(+). The protein operates within quinol/quinone metabolism; menaquinone biosynthesis; menaquinol from 1,4-dihydroxy-2-naphthoate: step 2/2. Its pathway is cofactor biosynthesis; ubiquinone biosynthesis. Its function is as follows. Methyltransferase required for the conversion of demethylmenaquinol (DMKH2) to menaquinol (MKH2) and the conversion of 2-polyprenyl-6-methoxy-1,4-benzoquinol (DDMQH2) to 2-polyprenyl-3-methyl-6-methoxy-1,4-benzoquinol (DMQH2). This chain is Ubiquinone/menaquinone biosynthesis C-methyltransferase UbiE, found in Bordetella avium (strain 197N).